A 206-amino-acid chain; its full sequence is Ras-related protein Ral-B (206 aa).

21–29 (GSGGVGKSA) lines the GTP pocket. Residues 43 to 51 (YEPTKADSY) carry the Effector region motif. GTP is bound by residues 68 to 72 (DTAGQ), 128 to 131 (NKSD), and 158 to 160 (SAK). A compositionally biased stretch (basic and acidic residues) spans 180-189 (KMSENKDKNG). Positions 180–206 (KMSENKDKNGKKSSKNKKSFKERCCLL) are disordered. Cys203 is subject to Cysteine methyl ester. The S-geranylgeranyl cysteine moiety is linked to residue Cys203. The propeptide at 204-206 (CLL) is removed in mature form.

This sequence belongs to the small GTPase superfamily. Ras family. In terms of assembly, interacts with EXOC2/Sec5 and EXOC8/Exo84. Interacts (via effector domain) with RALBP1. In terms of processing, prenylation is essential for membrane localization. The farnesylated form confers resistance to the proapoptotic and anti-anchorage-dependent growth effects of some geranylgeranyltransferase I inhibitors.

Its subcellular location is the cell membrane. The protein resides in the midbody. The enzyme catalyses GTP + H2O = GDP + phosphate + H(+). Alternates between an inactive form bound to GDP and an active form bound to GTP. Activated by a guanine nucleotide-exchange factor (GEF) and inactivated by a GTPase-activating protein (GAP). In terms of biological role, multifunctional GTPase involved in a variety of cellular processes including gene expression, cell migration, cell proliferation, oncogenic transformation and membrane trafficking. Accomplishes its multiple functions by interacting with distinct downstream effectors. Acts as a GTP sensor for GTP-dependent exocytosis of dense core vesicles. Required both to stabilize the assembly of the exocyst complex and to localize functional exocyst complexes to the leading edge of migrating cells. Required for suppression of apoptosis. In late stages of cytokinesis, upon completion of the bridge formation between dividing cells, mediates exocyst recruitment to the midbody to drive abscission. Involved in ligand-dependent receptor mediated endocytosis of the EGF and insulin receptors. In Pongo abelii (Sumatran orangutan), this protein is Ras-related protein Ral-B (RALB).